The following is a 475-amino-acid chain: Ribulose bisphosphate carboxylase large chain (475 aa).

A propeptide spanning residues 1-2 is cleaved from the precursor; it reads MS. Residue Pro3 is modified to N-acetylproline. Lys14 bears the N6,N6,N6-trimethyllysine mark. Substrate contacts are provided by Asn123 and Thr173. The active-site Proton acceptor is the Lys175. Residue Lys177 coordinates substrate. Mg(2+) is bound by residues Lys201, Asp203, and Glu204. At Lys201 the chain carries N6-carboxylysine. The Proton acceptor role is filled by His294. Residues Arg295, His327, and Ser379 each coordinate substrate.

The protein belongs to the RuBisCO large chain family. Type I subfamily. Heterohexadecamer of 8 large chains and 8 small chains; disulfide-linked. The disulfide link is formed within the large subunit homodimers. Mg(2+) is required as a cofactor. Post-translationally, the disulfide bond which can form in the large chain dimeric partners within the hexadecamer appears to be associated with oxidative stress and protein turnover.

Its subcellular location is the plastid. The protein localises to the chloroplast. It carries out the reaction 2 (2R)-3-phosphoglycerate + 2 H(+) = D-ribulose 1,5-bisphosphate + CO2 + H2O. The catalysed reaction is D-ribulose 1,5-bisphosphate + O2 = 2-phosphoglycolate + (2R)-3-phosphoglycerate + 2 H(+). In terms of biological role, ruBisCO catalyzes two reactions: the carboxylation of D-ribulose 1,5-bisphosphate, the primary event in carbon dioxide fixation, as well as the oxidative fragmentation of the pentose substrate in the photorespiration process. Both reactions occur simultaneously and in competition at the same active site. The sequence is that of Ribulose bisphosphate carboxylase large chain from Notothixos subaureus (Golden mistletoe).